We begin with the raw amino-acid sequence, 149 residues long: Lipoprotein signal peptidase (149 aa).

2 helical membrane-spanning segments follow: residues 53-73 (MPGKSWLFFISALLVIMALVI) and 89-109 (GLIAGGALGNLIDRYFYGFVI). Catalysis depends on residues aspartate 110 and aspartate 124. Residues 119-139 (VFNLADSAIVCGGILLLILVL) traverse the membrane as a helical segment.

This sequence belongs to the peptidase A8 family.

The protein resides in the cell membrane. The enzyme catalyses Release of signal peptides from bacterial membrane prolipoproteins. Hydrolyzes -Xaa-Yaa-Zaa-|-(S,diacylglyceryl)Cys-, in which Xaa is hydrophobic (preferably Leu), and Yaa (Ala or Ser) and Zaa (Gly or Ala) have small, neutral side chains.. It participates in protein modification; lipoprotein biosynthesis (signal peptide cleavage). Functionally, this protein specifically catalyzes the removal of signal peptides from prolipoproteins. The sequence is that of Lipoprotein signal peptidase from Syntrophomonas wolfei subsp. wolfei (strain DSM 2245B / Goettingen).